An 804-amino-acid polypeptide reads, in one-letter code: Leucine--tRNA ligase (804 aa).

Residues 40–51 carry the 'HIGH' region motif; that stretch reads PYPSGAGLHVGH. The 'KMSKS' region motif lies at 576–580; the sequence is KMSKS. Residue Lys579 coordinates ATP.

This sequence belongs to the class-I aminoacyl-tRNA synthetase family.

It localises to the cytoplasm. The enzyme catalyses tRNA(Leu) + L-leucine + ATP = L-leucyl-tRNA(Leu) + AMP + diphosphate. The chain is Leucine--tRNA ligase from Bacillus pumilus (strain SAFR-032).